A 429-amino-acid polypeptide reads, in one-letter code: Adenylosuccinate synthetase (429 aa).

GTP-binding positions include 12-18 (GDEGKGK) and 40-42 (GHT). The active-site Proton acceptor is the D13. The Mg(2+) site is built by D13 and G40. Residues 13 to 16 (DEGK), 38 to 41 (NAGH), T128, R142, Q223, T238, and R302 each bind IMP. The active-site Proton donor is H41. 298–304 (TVTGRPR) is a binding site for substrate. GTP contacts are provided by residues R304, 330-332 (LLD), and 412-414 (SVG).

Belongs to the adenylosuccinate synthetase family. As to quaternary structure, homodimer. Requires Mg(2+) as cofactor.

The protein localises to the cytoplasm. The catalysed reaction is IMP + L-aspartate + GTP = N(6)-(1,2-dicarboxyethyl)-AMP + GDP + phosphate + 2 H(+). The protein operates within purine metabolism; AMP biosynthesis via de novo pathway; AMP from IMP: step 1/2. In terms of biological role, plays an important role in the de novo pathway of purine nucleotide biosynthesis. Catalyzes the first committed step in the biosynthesis of AMP from IMP. In Lactobacillus johnsonii (strain CNCM I-12250 / La1 / NCC 533), this protein is Adenylosuccinate synthetase.